Consider the following 162-residue polypeptide: UPF0102 protein Bpet0439 (162 aa).

The tract at residues 15-52 (QAQQRQMKRRRAAAHRAARGPAPARAPRASPTQRTGTA) is disordered. The segment covering 20-32 (QMKRRRAAAHRAA) has biased composition (basic residues). Residues 33–48 (RGPAPARAPRASPTQR) are compositionally biased toward low complexity.

It belongs to the UPF0102 family.

In Bordetella petrii (strain ATCC BAA-461 / DSM 12804 / CCUG 43448), this protein is UPF0102 protein Bpet0439.